The chain runs to 681 residues: Sterile alpha motif domain-containing protein 11 (681 aa).

Disordered stretches follow at residues 41–77, 212–234, 251–307, and 407–498; these read RNLK…EDGP, YHLG…HLPS, GPSG…APHV, and LLAL…GAEG. Lys72 is covalently cross-linked (Glycyl lysine isopeptide (Lys-Gly) (interchain with G-Cter in SUMO2)). Basic and acidic residues predominate over residues 219–234; it reads HGEDPPWHDPPHHLPS. Residues 412 to 423 show a composition bias toward pro residues; it reads PQGPPGSGPPTP. Thr485 bears the Phosphothreonine mark. Residues 543 to 608 form the SAM domain; it reads WTVDDVCSFV…AQVARRLGRV (66 aa). Positions 625-681 are disordered; sequence LRAPERELGTGEQPLSPTTATSPYGGGHALAGQTSPKQENGTLALLPGAPDPSQPLC. Composition is skewed to polar residues over residues 637–646 and 656–665; these read QPLSPTTATS and GQTSPKQENG. The residue at position 640 (Ser640) is a Phosphoserine.

As to quaternary structure, self-associates. Component of a Polycomb group (PcG) multiprotein PRC1-like complex. Interacts with SAMD7 and PHC2. As to expression, expressed in the outer and inner nuclear layers, ganglion cell layer and rod photoreceptors of the retina (at protein level). Widely expressed, showing the highest expression in kidney, prostate and retina.

Its subcellular location is the nucleus. Component of a Polycomb group (PcG) multiprotein PRC1-like complex, essential for establishing rod photoreceptor cell identity and function by silencing nonrod gene expression in developing rod photoreceptor cells. This chain is Sterile alpha motif domain-containing protein 11 (SAMD11), found in Homo sapiens (Human).